A 438-amino-acid polypeptide reads, in one-letter code: Enolase (438 aa).

Positions 159 and 168 each coordinate substrate. E211 (proton donor) is an active-site residue. Mg(2+)-binding residues include D246, E297, and D322. Substrate-binding residues include E297 and D322. Residue K347 is the Proton acceptor of the active site. Substrate-binding positions include 374–377 (SHRS) and K398.

Belongs to the enolase family. As to quaternary structure, homodimer. Requires Mg(2+) as cofactor.

The protein resides in the cytoplasm. It carries out the reaction (2R)-2-phosphoglycerate = phosphoenolpyruvate + H2O. The protein operates within carbohydrate degradation; glycolysis; pyruvate from D-glyceraldehyde 3-phosphate: step 4/5. In Penicillium chrysogenum (Penicillium notatum), this protein is Enolase (enoA).